Reading from the N-terminus, the 395-residue chain is S-adenosylmethionine synthase (395 aa).

Residue His16 coordinates ATP. A Mg(2+)-binding site is contributed by Asp18. Glu44 is a K(+) binding site. Residues Glu57 and Gln100 each contribute to the L-methionine site. The interval 100–110 (QSPDIAQGVDR) is flexible loop. ATP contacts are provided by residues 167–169 (DAK), 233–234 (RF), Asp242, 248–249 (RK), Ala265, and Lys269. Asp242 contributes to the L-methionine binding site. An L-methionine-binding site is contributed by Lys273.

This sequence belongs to the AdoMet synthase family. Homotetramer; dimer of dimers. Mg(2+) is required as a cofactor. K(+) serves as cofactor.

Its subcellular location is the cytoplasm. It catalyses the reaction L-methionine + ATP + H2O = S-adenosyl-L-methionine + phosphate + diphosphate. The protein operates within amino-acid biosynthesis; S-adenosyl-L-methionine biosynthesis; S-adenosyl-L-methionine from L-methionine: step 1/1. In terms of biological role, catalyzes the formation of S-adenosylmethionine (AdoMet) from methionine and ATP. The overall synthetic reaction is composed of two sequential steps, AdoMet formation and the subsequent tripolyphosphate hydrolysis which occurs prior to release of AdoMet from the enzyme. This Burkholderia cenocepacia (strain HI2424) protein is S-adenosylmethionine synthase.